Reading from the N-terminus, the 245-residue chain is Ribosomal RNA large subunit methyltransferase E (245 aa).

The S-adenosyl-L-methionine site is built by Gly83, Trp85, Asp111, Asp127, and Asp156. Lys196 serves as the catalytic Proton acceptor.

It belongs to the class I-like SAM-binding methyltransferase superfamily. RNA methyltransferase RlmE family.

It is found in the cytoplasm. It catalyses the reaction uridine(2552) in 23S rRNA + S-adenosyl-L-methionine = 2'-O-methyluridine(2552) in 23S rRNA + S-adenosyl-L-homocysteine + H(+). In terms of biological role, specifically methylates the uridine in position 2552 of 23S rRNA at the 2'-O position of the ribose in the fully assembled 50S ribosomal subunit. The chain is Ribosomal RNA large subunit methyltransferase E from Polaromonas naphthalenivorans (strain CJ2).